The chain runs to 431 residues: Chaperone SurA (431 aa).

The signal sequence occupies residues 1–20; it reads MKNWRTFILGLALCANGALA. PpiC domains follow at residues 171 to 272 and 282 to 382; these read GAEF…KVND and VTEV…QLID.

Its subcellular location is the periplasm. It catalyses the reaction [protein]-peptidylproline (omega=180) = [protein]-peptidylproline (omega=0). Functionally, chaperone involved in the correct folding and assembly of outer membrane proteins. Recognizes specific patterns of aromatic residues and the orientation of their side chains, which are found more frequently in integral outer membrane proteins. May act in both early periplasmic and late outer membrane-associated steps of protein maturation. This chain is Chaperone SurA, found in Sodalis glossinidius (strain morsitans).